A 257-amino-acid chain; its full sequence is Small ribosomal subunit protein uS2 (257 aa).

It belongs to the universal ribosomal protein uS2 family.

The polypeptide is Small ribosomal subunit protein uS2 (Ruegeria pomeroyi (strain ATCC 700808 / DSM 15171 / DSS-3) (Silicibacter pomeroyi)).